The chain runs to 65 residues: Alpha-toxin Bs-Tx28 (65 aa).

An LCN-type CS-alpha/beta domain is found at 3-65 (RDAYIADDKN…VPIRIPGKCR (63 aa)). Intrachain disulfides connect Cys-13-Cys-64, Cys-17-Cys-37, Cys-23-Cys-47, and Cys-27-Cys-49. Position 65 is an arginine amide (Arg-65).

This sequence belongs to the long (4 C-C) scorpion toxin superfamily. Sodium channel inhibitor family. Alpha subfamily. Expressed by the venom gland.

The protein localises to the secreted. Alpha toxins bind voltage-independently at site-3 of sodium channels (Nav) and inhibit the inactivation of the activated channels, thereby blocking neuronal transmission. This toxin inhibits the inactivation of activated TTX-sensitive sodium channels (Nav). This chain is Alpha-toxin Bs-Tx28, found in Hottentotta tamulus sindicus (Scorpion).